The sequence spans 153 residues: Transcriptional repressor NrdR (153 aa).

A zinc finger lies at 3–34 (CPFCNNISTNVKDSRSIEDDMLIRRRRVCPVC). The 91-residue stretch at 49–139 (LMVIKKNGGL…VYMNFKNIND (91 aa)) folds into the ATP-cone domain.

This sequence belongs to the NrdR family. Zn(2+) is required as a cofactor.

Functionally, negatively regulates transcription of bacterial ribonucleotide reductase nrd genes and operons by binding to NrdR-boxes. The protein is Transcriptional repressor NrdR of Ehrlichia ruminantium (strain Gardel).